A 198-amino-acid polypeptide reads, in one-letter code: Ribonuclease HII (198 aa).

In terms of domain architecture, RNase H type-2 spans 10-198; sequence QLVAGVDEVG…PVKRALGLAS (189 aa). The a divalent metal cation site is built by Asp16, Glu17, and Asp108.

Belongs to the RNase HII family. Requires Mn(2+) as cofactor. The cofactor is Mg(2+).

Its subcellular location is the cytoplasm. The catalysed reaction is Endonucleolytic cleavage to 5'-phosphomonoester.. In terms of biological role, endonuclease that specifically degrades the RNA of RNA-DNA hybrids. In Escherichia fergusonii (strain ATCC 35469 / DSM 13698 / CCUG 18766 / IAM 14443 / JCM 21226 / LMG 7866 / NBRC 102419 / NCTC 12128 / CDC 0568-73), this protein is Ribonuclease HII.